The chain runs to 363 residues: DNA polymerase IV (363 aa).

In terms of domain architecture, UmuC spans 14 to 197 (IIHIDMDAFF…LPVEKFHGVG (184 aa)). Residues Asp-18 and Asp-115 each coordinate Mg(2+). The active site involves Glu-116.

Belongs to the DNA polymerase type-Y family. In terms of assembly, monomer. Requires Mg(2+) as cofactor.

It is found in the cytoplasm. It carries out the reaction DNA(n) + a 2'-deoxyribonucleoside 5'-triphosphate = DNA(n+1) + diphosphate. Poorly processive, error-prone DNA polymerase involved in untargeted mutagenesis. Copies undamaged DNA at stalled replication forks, which arise in vivo from mismatched or misaligned primer ends. These misaligned primers can be extended by PolIV. Exhibits no 3'-5' exonuclease (proofreading) activity. May be involved in translesional synthesis, in conjunction with the beta clamp from PolIII. The chain is DNA polymerase IV from Lactococcus lactis subsp. lactis (strain IL1403) (Streptococcus lactis).